A 387-amino-acid polypeptide reads, in one-letter code: Phosphoglycerate kinase (387 aa).

Residues 21–23 (DLN), arginine 36, 59–62 (HLGR), arginine 113, and arginine 146 each bind substrate. Residues lysine 197, glutamate 314, and 340–343 (GGDT) each bind ATP.

This sequence belongs to the phosphoglycerate kinase family. Monomer.

The protein localises to the cytoplasm. The catalysed reaction is (2R)-3-phosphoglycerate + ATP = (2R)-3-phospho-glyceroyl phosphate + ADP. It functions in the pathway carbohydrate degradation; glycolysis; pyruvate from D-glyceraldehyde 3-phosphate: step 2/5. This chain is Phosphoglycerate kinase, found in Pseudomonas entomophila (strain L48).